The primary structure comprises 544 residues: Membrane protein insertase YidC (544 aa).

Residues 4 to 24 (KALLALVLSAAVLLIYQIFIY) traverse the membrane as a helical segment. Residues 44–78 (NPAAPVSPQTPADEPSSGSAANPETAAALPVDGTE) are disordered. 3 consecutive transmembrane segments (helical) span residues 363 to 383 (NYGI…WPLG), 434 to 454 (LPMI…LYAI), and 508 to 528 (PVIF…YWLF).

The protein belongs to the OXA1/ALB3/YidC family. Type 1 subfamily. Interacts with the Sec translocase complex via SecD. Specifically interacts with transmembrane segments of nascent integral membrane proteins during membrane integration.

The protein localises to the cell inner membrane. In terms of biological role, required for the insertion and/or proper folding and/or complex formation of integral membrane proteins into the membrane. Involved in integration of membrane proteins that insert both dependently and independently of the Sec translocase complex, as well as at least some lipoproteins. Aids folding of multispanning membrane proteins. This Syntrophus aciditrophicus (strain SB) protein is Membrane protein insertase YidC.